Here is a 418-residue protein sequence, read N- to C-terminus: F-box protein At1g10780 (418 aa).

Positions Met1–Asn47 constitute an F-box domain.

The chain is F-box protein At1g10780 from Arabidopsis thaliana (Mouse-ear cress).